A 276-amino-acid chain; its full sequence is NH(3)-dependent NAD(+) synthetase (276 aa).

43 to 50 contacts ATP; that stretch reads GISGGVDS. Aspartate 49 is a binding site for Mg(2+). Arginine 146 lines the deamido-NAD(+) pocket. Threonine 166 lines the ATP pocket. Glutamate 171 is a Mg(2+) binding site. Residues lysine 179 and aspartate 186 each contribute to the deamido-NAD(+) site. Residues lysine 195 and threonine 217 each coordinate ATP. 266 to 267 lines the deamido-NAD(+) pocket; sequence HK.

The protein belongs to the NAD synthetase family. In terms of assembly, homodimer.

It catalyses the reaction deamido-NAD(+) + NH4(+) + ATP = AMP + diphosphate + NAD(+) + H(+). Its pathway is cofactor biosynthesis; NAD(+) biosynthesis; NAD(+) from deamido-NAD(+) (ammonia route): step 1/1. In terms of biological role, catalyzes the ATP-dependent amidation of deamido-NAD to form NAD. Uses ammonia as a nitrogen source. The protein is NH(3)-dependent NAD(+) synthetase of Shewanella pealeana (strain ATCC 700345 / ANG-SQ1).